Reading from the N-terminus, the 181-residue chain is Large ribosomal subunit protein uL5 (181 aa).

This sequence belongs to the universal ribosomal protein uL5 family. In terms of assembly, part of the 50S ribosomal subunit; part of the 5S rRNA/L5/L18/L25 subcomplex. Contacts the 5S rRNA and the P site tRNA. Forms a bridge to the 30S subunit in the 70S ribosome.

Its function is as follows. This is one of the proteins that bind and probably mediate the attachment of the 5S RNA into the large ribosomal subunit, where it forms part of the central protuberance. In the 70S ribosome it contacts protein S13 of the 30S subunit (bridge B1b), connecting the 2 subunits; this bridge is implicated in subunit movement. Contacts the P site tRNA; the 5S rRNA and some of its associated proteins might help stabilize positioning of ribosome-bound tRNAs. This Helicobacter pylori (strain ATCC 700392 / 26695) (Campylobacter pylori) protein is Large ribosomal subunit protein uL5.